The primary structure comprises 459 residues: Glutamyl-tRNA reductase (459 aa).

Residues 49 to 52, Ser-109, 114 to 116, and Gln-120 contribute to the substrate site; these read TCNR and ETQ. Cys-50 (nucleophile) is an active-site residue. NADP(+) is bound at residue 189–194; that stretch reads GAGKMG.

It belongs to the glutamyl-tRNA reductase family. In terms of assembly, homodimer.

The catalysed reaction is (S)-4-amino-5-oxopentanoate + tRNA(Glu) + NADP(+) = L-glutamyl-tRNA(Glu) + NADPH + H(+). It participates in porphyrin-containing compound metabolism; protoporphyrin-IX biosynthesis; 5-aminolevulinate from L-glutamyl-tRNA(Glu): step 1/2. In terms of biological role, catalyzes the NADPH-dependent reduction of glutamyl-tRNA(Glu) to glutamate 1-semialdehyde (GSA). This is Glutamyl-tRNA reductase from Halalkalibacterium halodurans (strain ATCC BAA-125 / DSM 18197 / FERM 7344 / JCM 9153 / C-125) (Bacillus halodurans).